We begin with the raw amino-acid sequence, 68 residues long: Large ribosomal subunit protein bL35 (68 aa).

The protein belongs to the bacterial ribosomal protein bL35 family.

The sequence is that of Large ribosomal subunit protein bL35 from Rickettsia typhi (strain ATCC VR-144 / Wilmington).